The chain runs to 380 residues: Alanine racemase (380 aa).

Residue Lys-39 is the Proton acceptor; specific for D-alanine of the active site. The residue at position 39 (Lys-39) is an N6-(pyridoxal phosphate)lysine. Arg-137 contacts substrate. The active-site Proton acceptor; specific for L-alanine is the Tyr-263. Met-310 serves as a coordination point for substrate.

Belongs to the alanine racemase family. The cofactor is pyridoxal 5'-phosphate.

The catalysed reaction is L-alanine = D-alanine. It participates in amino-acid biosynthesis; D-alanine biosynthesis; D-alanine from L-alanine: step 1/1. In terms of biological role, catalyzes the interconversion of L-alanine and D-alanine. May also act on other amino acids. This is Alanine racemase (alr) from Macrococcus caseolyticus (strain JCSC5402) (Macrococcoides caseolyticum).